Reading from the N-terminus, the 380-residue chain is tRNA-specific 2-thiouridylase MnmA (380 aa).

ATP-binding positions include 26–33 (AMSGGVDS) and Leu52. Cys120 functions as the Nucleophile in the catalytic mechanism. A disulfide bridge connects residues Cys120 and Cys217. Gly144 lines the ATP pocket. The segment at 166-168 (RDQ) is interaction with tRNA. Cys217 serves as the catalytic Cysteine persulfide intermediate.

Belongs to the MnmA/TRMU family.

The protein resides in the cytoplasm. The enzyme catalyses S-sulfanyl-L-cysteinyl-[protein] + uridine(34) in tRNA + AH2 + ATP = 2-thiouridine(34) in tRNA + L-cysteinyl-[protein] + A + AMP + diphosphate + H(+). Functionally, catalyzes the 2-thiolation of uridine at the wobble position (U34) of tRNA, leading to the formation of s(2)U34. This Jannaschia sp. (strain CCS1) protein is tRNA-specific 2-thiouridylase MnmA.